The following is a 268-amino-acid chain: Small ribosomal subunit protein uS2 (268 aa).

A disordered region spans residues Q228–E268. Over residues S231–E268 the composition is skewed to acidic residues.

Belongs to the universal ribosomal protein uS2 family.

This Rippkaea orientalis (strain PCC 8801 / RF-1) (Cyanothece sp. (strain PCC 8801)) protein is Small ribosomal subunit protein uS2.